We begin with the raw amino-acid sequence, 139 residues long: Proline-rich nuclear receptor coactivator 2 (139 aa).

Disordered stretches follow at residues 1–51 (MGGG…GYNS), 61–80 (NGGK…SLSG), and 89–110 (ANQN…LPKP). 2 stretches are compositionally biased toward polar residues: residues 11-36 (APQS…NSQM) and 61-79 (NGGK…SSLS). An SH3-binding motif is present at residues 99-105 (SEPPSPS). The span at 101–110 (PPSPSVLPKP) shows a compositional bias: pro residues.

This sequence belongs to the PNRC family. PNRC2 subfamily. In terms of assembly, interacts with UPF1/RENT1; preferentially interacts with hyperphosphorylated form. Interacts with DCP1A. Interacts with many nuclear receptors including ESR1, ESRRA, ESRRG, NR3C1/GR, NR5A1, PGR, TR, RAR and RXR. As to expression, expressed in heart, lung, muscle and brain.

It is found in the nucleus. It localises to the cytoplasm. The protein localises to the P-body. Functionally, involved in nonsense-mediated mRNA decay (NMD) by acting as a bridge between the mRNA decapping complex and the NMD machinery. May act by targeting the NMD machinery to the P-body and recruiting the decapping machinery to aberrant mRNAs. Required for UPF1/RENT1 localization to the P-body. Plays a role in glucocorticoid receptor-mediated mRNA degradation by interacting with the glucocorticoid receptor NR3C1 in a ligand-dependent manner when it is bound to the 5' UTR of target mRNAs and recruiting the RNA helicase UPF1 and the mRNA-decapping enzyme DCP1A, leading to RNA decay. Also acts as a nuclear receptor coactivator. May play a role in controlling the energy balance between energy storage and energy expenditure. In Homo sapiens (Human), this protein is Proline-rich nuclear receptor coactivator 2 (PNRC2).